The chain runs to 666 residues: Probable potassium transport system protein Kup (666 aa).

A run of 12 helical transmembrane segments spans residues 16–36, 58–78, 100–120, 149–169, 173–193, 221–241, 253–273, 294–314, 343–363, 373–393, 399–419, and 424–444; these read GFIIALGIVYGDIGTSPLYTM, ISLIIWTLTLITTIKYVLIAL, PWLIVPAMIGGATLLSDGALT, IITTLVILIVLFGIQRFGTGF, IFGPVMFIWFSFLGVSGFFNM, IFILGSIFLATTGAEALYSDL, WPFVKMCIVLSYCGQAAWILA, VYLVSLATLAAIIASQALISG, LYIPVINWILFAVTSCTVLAF, YGLAITITMLMTTILLKYYLI, PILAHLVMAFFALVEFIFFLA, and FMHGGYAVVILALAIVFVMFI.

It belongs to the HAK/KUP transporter (TC 2.A.72) family.

The protein resides in the cell membrane. It catalyses the reaction K(+)(in) + H(+)(in) = K(+)(out) + H(+)(out). In terms of biological role, transport of potassium into the cell. Likely operates as a K(+):H(+) symporter. In Streptococcus pyogenes serotype M3 (strain ATCC BAA-595 / MGAS315), this protein is Probable potassium transport system protein Kup.